A 274-amino-acid polypeptide reads, in one-letter code: tRNA-cytidine(32) 2-sulfurtransferase (274 aa).

A PP-loop motif motif is present at residues serine 40 to serine 45. Residues cysteine 115, cysteine 118, and cysteine 206 each contribute to the [4Fe-4S] cluster site.

It belongs to the TtcA family. As to quaternary structure, homodimer. It depends on Mg(2+) as a cofactor. Requires [4Fe-4S] cluster as cofactor.

It localises to the cytoplasm. It catalyses the reaction cytidine(32) in tRNA + S-sulfanyl-L-cysteinyl-[cysteine desulfurase] + AH2 + ATP = 2-thiocytidine(32) in tRNA + L-cysteinyl-[cysteine desulfurase] + A + AMP + diphosphate + H(+). It participates in tRNA modification. In terms of biological role, catalyzes the ATP-dependent 2-thiolation of cytidine in position 32 of tRNA, to form 2-thiocytidine (s(2)C32). The sulfur atoms are provided by the cysteine/cysteine desulfurase (IscS) system. This chain is tRNA-cytidine(32) 2-sulfurtransferase, found in Pseudomonas putida (strain GB-1).